A 500-amino-acid chain; its full sequence is Low-density lipoprotein receptor-related protein 11 (500 aa).

An N-terminal signal peptide occupies residues 1–37 (MASVAQESAGSQRRLPPRHGALRGLLLLCLWLPSGRA). Topologically, residues 38 to 450 (ALPPAAPLSE…GGEHPAPETG (413 aa)) are extracellular. The MANSC domain maps to 99–184 (AMPDAIIRTK…FALHSGYSSY (86 aa)). N-linked (GlcNAc...) asparagine glycosylation is found at N164 and N291. Residues 210-305 (PLSKAGQDVV…VLRAAYSTGG (96 aa)) form the PKD domain. Positions 309–345 (TCSRYHFFCDDGCCIDITLACDGVQQCPDGSDEDFCQ) constitute an LDL-receptor class A domain. Intrachain disulfides connect C310–C322, C317–C335, and C329–C344. The segment at 358-445 (AASPALPRTT…KGDGGGGEHP (88 aa)) is disordered. N401 carries an N-linked (GlcNAc...) asparagine glycan. A helical transmembrane segment spans residues 451–473 (AVLPLALGLAITALLLLMVACRL). The Cytoplasmic segment spans residues 474 to 500 (RLVKQKLKKARPITSEESDYLINGMYL). A Phosphoserine modification is found at S491.

Belongs to the LDLR family.

The protein localises to the membrane. In Homo sapiens (Human), this protein is Low-density lipoprotein receptor-related protein 11 (LRP11).